We begin with the raw amino-acid sequence, 1191 residues long: Pyruvate-flavodoxin oxidoreductase (1191 aa).

4Fe-4S ferredoxin-type domains are found at residues 687-716 and 744-773; these read QVCS…VKAV and YVLA…TGAR. Cys-696, Cys-699, Cys-702, Cys-706, Cys-753, Cys-756, Cys-759, Cys-763, Cys-825, Cys-828, Cys-853, and Cys-1085 together coordinate [4Fe-4S] cluster.

The protein belongs to the pyruvate:ferredoxin/flavodoxin oxidoreductase family. The cofactor is [4Fe-4S] cluster.

The catalysed reaction is oxidized [flavodoxin] + pyruvate + CoA + 2 H(+) = reduced [flavodoxin] + acetyl-CoA + CO2. Functionally, oxidoreductase required for the transfer of electrons from pyruvate to flavodoxin, which reduces nitrogenase. The chain is Pyruvate-flavodoxin oxidoreductase (nifJ) from Rhodospirillum rubrum (strain ATCC 11170 / ATH 1.1.1 / DSM 467 / LMG 4362 / NCIMB 8255 / S1).